The primary structure comprises 122 residues: ATP-dependent Clp protease adapter protein ClpS (122 aa).

The segment at 1–33 (MHAPSQIRLTFNQDHPEPHEHEDEGAGLAVQES) is disordered. Basic and acidic residues predominate over residues 14–24 (DHPEPHEHEDE).

It belongs to the ClpS family. In terms of assembly, binds to the N-terminal domain of the chaperone ClpA.

Its function is as follows. Involved in the modulation of the specificity of the ClpAP-mediated ATP-dependent protein degradation. This Pseudomonas aeruginosa (strain ATCC 15692 / DSM 22644 / CIP 104116 / JCM 14847 / LMG 12228 / 1C / PRS 101 / PAO1) protein is ATP-dependent Clp protease adapter protein ClpS.